The following is a 284-amino-acid chain: 2-dehydro-3-deoxyphosphooctonate aldolase (284 aa).

It belongs to the KdsA family.

The protein resides in the cytoplasm. It catalyses the reaction D-arabinose 5-phosphate + phosphoenolpyruvate + H2O = 3-deoxy-alpha-D-manno-2-octulosonate-8-phosphate + phosphate. Its pathway is carbohydrate biosynthesis; 3-deoxy-D-manno-octulosonate biosynthesis; 3-deoxy-D-manno-octulosonate from D-ribulose 5-phosphate: step 2/3. The protein operates within bacterial outer membrane biogenesis; lipopolysaccharide biosynthesis. This Photobacterium profundum (strain SS9) protein is 2-dehydro-3-deoxyphosphooctonate aldolase.